Consider the following 396-residue polypeptide: Argininosuccinate synthase (396 aa).

ATP is bound at residue alanine 9–serine 17. Residue tyrosine 85 participates in L-citrulline binding. Residue glycine 115 participates in ATP binding. L-aspartate is bound by residues threonine 117, asparagine 121, and aspartate 122. Asparagine 121 serves as a coordination point for L-citrulline. L-citrulline-binding residues include arginine 125, serine 173, glutamate 258, and tyrosine 270.

The protein belongs to the argininosuccinate synthase family. Type 1 subfamily. In terms of assembly, homotetramer.

The protein resides in the cytoplasm. It catalyses the reaction L-citrulline + L-aspartate + ATP = 2-(N(omega)-L-arginino)succinate + AMP + diphosphate + H(+). It participates in amino-acid biosynthesis; L-arginine biosynthesis; L-arginine from L-ornithine and carbamoyl phosphate: step 2/3. The protein is Argininosuccinate synthase of Streptococcus agalactiae serotype V (strain ATCC BAA-611 / 2603 V/R).